The following is a 436-amino-acid chain: Trigger factor (436 aa).

The 86-residue stretch at 163–248 (GDRVTLDFAG…VKEVAEGVLP (86 aa)) folds into the PPIase FKBP-type domain.

Belongs to the FKBP-type PPIase family. Tig subfamily.

The protein localises to the cytoplasm. The enzyme catalyses [protein]-peptidylproline (omega=180) = [protein]-peptidylproline (omega=0). Involved in protein export. Acts as a chaperone by maintaining the newly synthesized protein in an open conformation. Functions as a peptidyl-prolyl cis-trans isomerase. The protein is Trigger factor of Bordetella petrii (strain ATCC BAA-461 / DSM 12804 / CCUG 43448).